The chain runs to 464 residues: Glutamate decarboxylase beta (464 aa).

Lys275 carries the post-translational modification N6-(pyridoxal phosphate)lysine.

It belongs to the group II decarboxylase family. The cofactor is pyridoxal 5'-phosphate.

It carries out the reaction L-glutamate + H(+) = 4-aminobutanoate + CO2. Converts internalized glutamate to GABA and increases the internal pH. Involved in glutamate-dependent acid resistance in gastric fluid. This Listeria innocua serovar 6a (strain ATCC BAA-680 / CLIP 11262) protein is Glutamate decarboxylase beta (gadB).